Here is a 187-residue protein sequence, read N- to C-terminus: Coiled-coil domain-containing protein 201 (187 aa).

Disordered regions lie at residues 1 to 79 (MEPG…PPAT) and 92 to 159 (KESS…RAAA). Residues 111 to 131 (LTQRQRQRQQQQQQQESLRAK) adopt a coiled-coil conformation. Basic residues predominate over residues 147-157 (GRKRRDPKKRA).

This chain is Coiled-coil domain-containing protein 201, found in Homo sapiens (Human).